Reading from the N-terminus, the 60-residue chain is UPF0434 protein NMCC_0628 (60 aa).

Belongs to the UPF0434 family.

This chain is UPF0434 protein NMCC_0628, found in Neisseria meningitidis serogroup C (strain 053442).